We begin with the raw amino-acid sequence, 569 residues long: Putative potassium-transporting ATPase ATP-binding subunit (569 aa).

2 helical membrane passes run 34–54 (PVMFVVWAGSVLATLLTLAMV) and 58–78 (IAGSALFTGVISLWLWFTVLF). The active-site 4-aspartylphosphate intermediate is the Asp194. ATP contacts are provided by residues Asp231, Glu235, 264-271 (FTAQSRMS), and Lys282. Asp405 and Asp409 together coordinate Mg(2+). A run of 3 helical transmembrane segments spans residues 475-495 (FAIIPAAFAATYPQLNALNVM), 503-523 (AILSAVIFNALIIIFLIPLAL), and 543-563 (IYGLGGLVVPFIGIKVIDVLL).

Belongs to the cation transport ATPase (P-type) (TC 3.A.3) family. Type IA subfamily. The system is composed of three essential subunits: KdpA, KdpB and KdpC.

Its subcellular location is the cell inner membrane. The catalysed reaction is K(+)(out) + ATP + H2O = K(+)(in) + ADP + phosphate + H(+). Part of the high-affinity ATP-driven potassium transport (or Kdp) system, which catalyzes the hydrolysis of ATP coupled with the electrogenic transport of potassium into the cytoplasm. This subunit is responsible for energy coupling to the transport system and for the release of the potassium ions to the cytoplasm. The protein is Putative potassium-transporting ATPase ATP-binding subunit of Salmonella typhi.